Reading from the N-terminus, the 493-residue chain is Chitinase 1 (493 aa).

A signal peptide spans 1–20 (MISCNILGITIAAFITSTLA). The 292-residue stretch at 27 to 318 (VNVMYYWGQN…HGSSAALGQA (292 aa)) folds into the GH18 domain. Catalysis depends on Glu164, which acts as the Proton donor.

The protein belongs to the glycosyl hydrolase 18 family. Chitinase class III subfamily.

It catalyses the reaction Random endo-hydrolysis of N-acetyl-beta-D-glucosaminide (1-&gt;4)-beta-linkages in chitin and chitodextrins.. The polypeptide is Chitinase 1 (CHI1) (Rhizopus niveus).